Consider the following 261-residue polypeptide: Cytochrome c oxidase subunit 3 (261 aa).

Residues 1–15 (MTHQTHAYHMVNPSP) are Mitochondrial matrix-facing. The helical transmembrane segment at 16–34 (WPLTGALSALLMTSGLAMW) threads the bilayer. Topologically, residues 35-40 (FHFNST) are mitochondrial intermembrane. A helical transmembrane segment spans residues 41 to 66 (LLLALGLLTNILTMYQWWRDIIREST). Residues 67–72 (FQGHHT) are Mitochondrial matrix-facing. Residues 73–105 (SIVQKGLRYGMILFIISEVFFFSGFFWAFYHSS) traverse the membrane as a helical segment. Over 106-128 (LAPTPELGGCWPPTGIHPLNPLE) the chain is Mitochondrial intermembrane. A helical membrane pass occupies residues 129–152 (VPLLNTSVLLASGVSITWAHHSLM). The Mitochondrial matrix segment spans residues 153 to 155 (EGN). Residues 156-183 (RKNMLQGLFITISLGVYFTLLQASEYYE) traverse the membrane as a helical segment. Over 184-190 (ASFTISD) the chain is Mitochondrial intermembrane. Residues 191–223 (GVYGSTFFVATGFHGLHVIIGSTFLIVCFLRQL) form a helical membrane-spanning segment. Residues 224 to 232 (KFHFTSSHH) lie on the Mitochondrial matrix side of the membrane. The chain crosses the membrane as a helical span at residues 233 to 256 (FGFEAAAWYWHFVDVVWLFLYVSI). At 257–261 (YWWGS) the chain is on the mitochondrial intermembrane side.

Belongs to the cytochrome c oxidase subunit 3 family. As to quaternary structure, component of the cytochrome c oxidase (complex IV, CIV), a multisubunit enzyme composed of 14 subunits. The complex is composed of a catalytic core of 3 subunits MT-CO1, MT-CO2 and MT-CO3, encoded in the mitochondrial DNA, and 11 supernumerary subunits COX4I, COX5A, COX5B, COX6A, COX6B, COX6C, COX7A, COX7B, COX7C, COX8 and NDUFA4, which are encoded in the nuclear genome. The complex exists as a monomer or a dimer and forms supercomplexes (SCs) in the inner mitochondrial membrane with NADH-ubiquinone oxidoreductase (complex I, CI) and ubiquinol-cytochrome c oxidoreductase (cytochrome b-c1 complex, complex III, CIII), resulting in different assemblies (supercomplex SCI(1)III(2)IV(1) and megacomplex MCI(2)III(2)IV(2)).

Its subcellular location is the mitochondrion inner membrane. It carries out the reaction 4 Fe(II)-[cytochrome c] + O2 + 8 H(+)(in) = 4 Fe(III)-[cytochrome c] + 2 H2O + 4 H(+)(out). In terms of biological role, component of the cytochrome c oxidase, the last enzyme in the mitochondrial electron transport chain which drives oxidative phosphorylation. The respiratory chain contains 3 multisubunit complexes succinate dehydrogenase (complex II, CII), ubiquinol-cytochrome c oxidoreductase (cytochrome b-c1 complex, complex III, CIII) and cytochrome c oxidase (complex IV, CIV), that cooperate to transfer electrons derived from NADH and succinate to molecular oxygen, creating an electrochemical gradient over the inner membrane that drives transmembrane transport and the ATP synthase. Cytochrome c oxidase is the component of the respiratory chain that catalyzes the reduction of oxygen to water. Electrons originating from reduced cytochrome c in the intermembrane space (IMS) are transferred via the dinuclear copper A center (CU(A)) of subunit 2 and heme A of subunit 1 to the active site in subunit 1, a binuclear center (BNC) formed by heme A3 and copper B (CU(B)). The BNC reduces molecular oxygen to 2 water molecules using 4 electrons from cytochrome c in the IMS and 4 protons from the mitochondrial matrix. This is Cytochrome c oxidase subunit 3 (MT-CO3) from Equus asinus (Donkey).